The sequence spans 206 residues: Small ribosomal subunit protein uS4 (206 aa).

The region spanning threonine 96–lysine 156 is the S4 RNA-binding domain.

It belongs to the universal ribosomal protein uS4 family. In terms of assembly, part of the 30S ribosomal subunit. Contacts protein S5. The interaction surface between S4 and S5 is involved in control of translational fidelity.

Its function is as follows. One of the primary rRNA binding proteins, it binds directly to 16S rRNA where it nucleates assembly of the body of the 30S subunit. With S5 and S12 plays an important role in translational accuracy. The polypeptide is Small ribosomal subunit protein uS4 (Shewanella baltica (strain OS223)).